The sequence spans 364 residues: UDP-arabinopyranose mutase 1 (364 aa).

The DXD motif motif lies at 110-112; that stretch reads DDD. N-linked (Glc...) arginine glycosylation occurs at Arg158.

The protein belongs to the RGP family. As to quaternary structure, heteromers with UAM2 and UAM3. Mn(2+) is required as a cofactor. Requires Mg(2+) as cofactor. Post-translationally, reversibly glycosylated in vitro at Arg-158 by UDP-glucose. Reversibly glycosylated by UDP-xylose and UDP-galactose.

Its subcellular location is the golgi apparatus. The enzyme catalyses UDP-beta-L-arabinofuranose = UDP-beta-L-arabinopyranose. Functionally, UDP-L-arabinose mutase involved in the biosynthesis of cell wall non-cellulosic polysaccharides. Catalyzes the interconvertion of UDP-L-arabinopyranose (UDP-Arap) and UDP-L-arabinofuranose (UDP-Araf). Preferentially catalyzes the formation of UDP-Arap from UDP-Araf. At thermodynamic equilibrium in vitro the ratio of the pyranose form over the furanose form is 90:10. Is probably active as heteromer in vivo. The protein is UDP-arabinopyranose mutase 1 of Oryza sativa subsp. japonica (Rice).